The chain runs to 395 residues: MVDTCFLSRGLTTLAGLLLLPFGSLAASQIEDQAEQFFRSGHTNNWAVLVCTSRFWFNYRHVANTLSVYRSVKRLGIPDSHIVLMLADDMACNPRNPKPATVYSHKNMELNVYGDDVEVDYRSYEVTVENFLRVLTGRIPSSTPRSKRLLSDDRSNILIYMTGHGGNGFLKFQDSEEITNIELADAFEQMWQKRRYNELLFIIDTCQGASMYERFYSPNIMALASSQVGEDSLSHQPDPAVGVHLMDRYTFYVLEFLEEINPASQTNMNDLFQVCPRSLCVSTPGHRTDLFQRDPKNVLITDFFGSVRKVEITTETISLQPDSGVVESSYKKDQMVEELMEPLKYAEQLPVAQIIHQKPKLKDWHPPGGFILGLWALIIMVFFKTYGIKHMKFIF.

The first 27 residues, 1-27 (MVDTCFLSRGLTTLAGLLLLPFGSLAA), serve as a signal peptide directing secretion. Topologically, residues 28 to 368 (SQIEDQAEQF…PKLKDWHPPG (341 aa)) are lumenal. Residues Asp79, Ile82, Glu118, and Asp120 each contribute to the Ca(2+) site. His164 (proton donor) is an active-site residue. The active-site Nucleophile; acyl-thioester intermediate is the Cys206. Positions 206, 232, and 234 each coordinate a protein. Residues 231–236 (DSLSHQ) are autoinhibitory loop. Cys275 and Cys280 are oxidised to a cystine. A helical membrane pass occupies residues 369–385 (GFILGLWALIIMVFFKT). Residues 386–395 (YGIKHMKFIF) are Cytoplasmic-facing.

It belongs to the peptidase C13 family. Heteropentamer. Part of the GPI-anchor transamidase complex, consisting of PIGK, PIGT, PIGS, PIGU and GAA1. Interacts with GPAA1. Interacts with PIGT; this interaction, via a disulfide link, stabilizes the expression of GAA1 and PIGK and links them to PIGS. The disulfide bond between PIGK/GPI8 and PIGT is important for normal enzyme activity.

It is found in the endoplasmic reticulum membrane. It functions in the pathway glycolipid biosynthesis; glycosylphosphatidylinositol-anchor biosynthesis. Its activity is regulated as follows. In the absence of proproteins substrates, exists in an inactive state with a disrupted catalytic site by an autoinhibitory loop. The binding of proprotein substrates, particularly the CSP region, to GPI-T triggers concerted conformational changes that alleviate the inhibition by the autoinhibitory loop. Meanwhile, proprotein residues near the omega- site induce the formation of a catalytic cleft for catalysis, following which the products are released and GPI-T reverts to the inactive state. In terms of biological role, catalytic subunit of the glycosylphosphatidylinositol-anchor (GPI-anchor) transamidase (GPI-T) complex that catalyzes the formation of the linkage between a proprotein and a GPI-anchor and participates in GPI anchored protein biosynthesis. Recognizes diverse proproteins at a C-terminal signal peptide (CSP) region that lacks consensus sequence and replaces it with a GPI-anchor via a transamidation reaction. Transamidation catalysis reaction follows a two-phase mechanism. In the acyl-enzyme phase, the carbonyl group of the proproteins's omega-site undergoes a nucleophilic attack forming an enzyme-substrate thioester bond. Followed by a general acid catalysis that allows CSP releasing, regenerating the carbonyl, and forming the acyl-enzyme intermediate. In the GPI-anchor attachment phase, the amino group of the GPI-anchor's ethanolamine phosphate, the one on third mannose (EtNP3), mediates a nucleophilic attack on the carbonyl of the acyl-enzyme intermediate, replacing the CSP, allowing GPI-anchor attachment to the omega-residue, therefore forming the product and freeing the enzyme. The chain is GPI-anchor transamidase from Bos taurus (Bovine).